Consider the following 543-residue polypeptide: CTP synthase (543 aa).

The amidoligase domain stretch occupies residues methionine 1–isoleucine 265. Residue serine 13 participates in CTP binding. Residue serine 13 participates in UTP binding. Residue serine 14 to leucine 19 coordinates ATP. Tyrosine 54 is a binding site for L-glutamine. Aspartate 71 serves as a coordination point for ATP. Positions 71 and 139 each coordinate Mg(2+). CTP is bound by residues aspartate 146–glutamate 148, lysine 186–glutamine 191, and lysine 222. UTP-binding positions include lysine 186–glutamine 191 and lysine 222. Arginine 238 to alanine 240 lines the ATP pocket. Residues threonine 291 to leucine 542 enclose the Glutamine amidotransferase type-1 domain. Glycine 353 provides a ligand contact to L-glutamine. The active-site Nucleophile; for glutamine hydrolysis is cysteine 380. L-glutamine-binding positions include phenylalanine 381–glutamine 384, glutamate 404, and arginine 470. Residues histidine 515 and glutamate 517 contribute to the active site.

It belongs to the CTP synthase family. As to quaternary structure, homotetramer.

The catalysed reaction is UTP + L-glutamine + ATP + H2O = CTP + L-glutamate + ADP + phosphate + 2 H(+). The enzyme catalyses L-glutamine + H2O = L-glutamate + NH4(+). It carries out the reaction UTP + NH4(+) + ATP = CTP + ADP + phosphate + 2 H(+). It functions in the pathway pyrimidine metabolism; CTP biosynthesis via de novo pathway; CTP from UDP: step 2/2. Allosterically activated by GTP, when glutamine is the substrate; GTP has no effect on the reaction when ammonia is the substrate. The allosteric effector GTP functions by stabilizing the protein conformation that binds the tetrahedral intermediate(s) formed during glutamine hydrolysis. Inhibited by the product CTP, via allosteric rather than competitive inhibition. Its function is as follows. Catalyzes the ATP-dependent amination of UTP to CTP with either L-glutamine or ammonia as the source of nitrogen. Regulates intracellular CTP levels through interactions with the four ribonucleotide triphosphates. The chain is CTP synthase from Rhodopseudomonas palustris (strain ATCC BAA-98 / CGA009).